The following is a 79-amino-acid chain: Virulence protein MsgA (79 aa).

Belongs to the DinI family.

Its function is as follows. Affects survival in macrophages. This Salmonella typhi protein is Virulence protein MsgA (msgA).